Reading from the N-terminus, the 118-residue chain is Small ribosomal subunit protein uS13 (118 aa).

The disordered stretch occupies residues 94-118 (GLPLRGQRTKTNARTRKGPRKPIKK).

Belongs to the universal ribosomal protein uS13 family. In terms of assembly, part of the 30S ribosomal subunit. Forms a loose heterodimer with protein S19. Forms two bridges to the 50S subunit in the 70S ribosome.

Its function is as follows. Located at the top of the head of the 30S subunit, it contacts several helices of the 16S rRNA. In the 70S ribosome it contacts the 23S rRNA (bridge B1a) and protein L5 of the 50S subunit (bridge B1b), connecting the 2 subunits; these bridges are implicated in subunit movement. Contacts the tRNAs in the A and P-sites. This chain is Small ribosomal subunit protein uS13, found in Cellvibrio japonicus (strain Ueda107) (Pseudomonas fluorescens subsp. cellulosa).